The primary structure comprises 309 residues: Carbonic anhydrase 4 (309 aa).

Positions 1-17 (MQLLLALLALAYVAPST) are cleaved as a signal peptide. The region spanning 20–282 (SHWCYEIQAK…LGNRQVFRSH (263 aa)) is the Alpha-carbonic anhydrase domain. 2 cysteine pairs are disulfide-bonded: cysteine 23–cysteine 35 and cysteine 45–cysteine 226. Histidine 87 acts as the Proton donor/acceptor in catalysis. 3 residues coordinate Zn(2+): histidine 114, histidine 116, and histidine 139. Asparagine 193 is a glycosylation site (N-linked (GlcNAc...) asparagine). 222–223 (TT) is a substrate binding site. Residue serine 281 is the site of GPI-anchor amidated serine attachment. A propeptide spans 282 to 309 (HASGRLLSLPLPTLLVPTLTCLVASFLH) (removed in mature form).

The protein belongs to the alpha-carbonic anhydrase family. As to quaternary structure, interacts with SLC4A4. Zn(2+) is required as a cofactor. The N-terminus is blocked. In terms of processing, glycosylated. As to expression, present in kidney and lung. Also particularly abundant in brain, muscle, heart and liver. Not detected in skin or spleen.

The protein resides in the cell membrane. It catalyses the reaction hydrogencarbonate + H(+) = CO2 + H2O. Inhibited by acetazolamide. In terms of biological role, catalyzes the reversible hydration of carbon dioxide into bicarbonate and protons and thus is essential to maintaining intracellular and extracellular pH. May stimulate the sodium/bicarbonate transporter activity of SLC4A4 that acts in pH homeostasis. It is essential for acid overload removal from the retina and retina epithelium, and acid release in the choriocapillaris in the choroid. The protein is Carbonic anhydrase 4 (Ca4) of Rattus norvegicus (Rat).